A 202-amino-acid chain; its full sequence is COMM domain-containing protein 10 (202 aa).

Residue Ala2 is modified to N-acetylalanine. Residues 133–202 (KLETVGWQLN…TIQAQLDSLT (70 aa)) form the COMM domain. Position 155 is a phosphoserine (Ser155).

The protein belongs to the COMM domain-containing protein 10 family. In terms of assembly, component of the commander complex consisting of the CCC subcomplex and the retriever subcomplex. Component of the CCC (COMMD/CCDC22/CCDC93) subcomplex consisting of COMMD1, COMMD2, COMMD3, COMMD4, COMMD5, COMMD6, COMMD7, COMMD8, COMMD9, COMMD10, CCDC22 and CCDC93; within the complex forms a heterodimer with COMMD5. Interacts with RELA, RELB, NFKB1/p105, NFKB2/p100. Interacts with CCDC22, CCDC93, SCNN1B, CUL1, CUL2, CUL3, CUL4A, CUL4B, CUL7. Ubiquitous.

It localises to the cytoplasm. The protein localises to the nucleus. In terms of biological role, scaffold protein in the commander complex that is essential for endosomal recycling of transmembrane cargos; the commander complex is composed of the CCC subcomplex and the retriever subcomplex. May modulate activity of cullin-RING E3 ubiquitin ligase (CRL) complexes. May down-regulate activation of NF-kappa-B. This is COMM domain-containing protein 10 (COMMD10) from Homo sapiens (Human).